A 224-amino-acid polypeptide reads, in one-letter code: Menaquinol:cytochrome c reductase cytochrome b subunit (224 aa).

Residues 37 to 57 (FSAFVYCFGGLTFFVTVIQVL) form a helical membrane-spanning segment. Tyr-42 lines the heme b pocket. Heme c is bound at residue Cys-43. Residues Arg-91, His-94, His-108, and Arg-111 each coordinate heme b. 3 consecutive transmembrane segments (helical) span residues 96–116 (WGASLVIVMMFLHTLRVFFQG), 126–146 (WIVGVLIFFVMLGLGFTGYLL), and 195–215 (IHVFFLPAALFGLMAAHFIMI). Heme b-binding residues include His-196 and His-211. Heme c is bound by residues Arg-216 and Ile-220. Ser-221 lines the heme b pocket.

Belongs to the cytochrome b family. In terms of assembly, the main subunits of the menaquinol:cytochrome c complex are a Rieske-type iron-sulfur protein (QcrA), a cytochrome b (QcrB) and a cytochrome c (QcrC). Requires heme b as cofactor. The cofactor is heme c.

It localises to the cell membrane. Functionally, component of the menaquinol:cytochrome c reductase complex. This is Menaquinol:cytochrome c reductase cytochrome b subunit from Bacillus subtilis (strain 168).